We begin with the raw amino-acid sequence, 610 residues long: GPI transamidase component GPI16 (610 aa).

An N-terminal signal peptide occupies residues M1–A19. The Lumenal portion of the chain corresponds to E20 to N551. The N-linked (GlcNAc...) asparagine glycan is linked to N184. A helical transmembrane segment spans residues V552 to V572. Over K573–D610 the chain is Cytoplasmic.

The protein belongs to the PIGT family. Forms a complex with CDC91, GPI17, GPI8 and GAA1. The disulfide bond between GPI8 and GPI16 is important for normal enzyme activity.

It localises to the endoplasmic reticulum membrane. It participates in glycolipid biosynthesis; glycosylphosphatidylinositol-anchor biosynthesis. In terms of biological role, component of the GPI transamidase complex. Involved in transfer of GPI to proteins. This Saccharomyces cerevisiae (strain ATCC 204508 / S288c) (Baker's yeast) protein is GPI transamidase component GPI16 (GPI16).